We begin with the raw amino-acid sequence, 521 residues long: HTH-type transcriptional regulatory protein TyrR (521 aa).

Positions 2-72 constitute an ACT domain; sequence RLEVFCQDRI…GVTDVRTVPY (71 aa). A PAS domain is found at 78-120; it reads EHRVLSALLVAMPEPVFSVDLRTKVELANPAAQNLFNLDENKI. One can recognise a Sigma-54 factor interaction domain in the interval 207–436; that stretch reads IVAVTPRMRQ…LKNALYRALT (230 aa). ATP-binding positions include 235-242 and 298-307; these read GDTGTGKD and ANGGSVLLDE. A DNA-binding region (H-T-H motif) is located at residues 489 to 509; sequence STRKLAKRLGVSHTAIANKLR.

In terms of assembly, homodimer. In presence of tyrosine (or high concentrations of phenylalanine or tryptophan) and ATP, it self-associates to form an hexamer.

The protein localises to the cytoplasm. Functionally, dual transcriptional regulator of the TyrR regulon, which includes a number of genes coding for proteins involved in the biosynthesis or transport of the three aromatic amino acids, phenylalanine, tyrosine and tryptophan. These three aromatic amino acids act as effectors which bind to the TyrR protein to form an active regulatory protein. Acts by binding specifically to TyrR boxes in the promoter region of the target genes. The polypeptide is HTH-type transcriptional regulatory protein TyrR (Enterobacter agglomerans (Erwinia herbicola)).